A 159-amino-acid polypeptide reads, in one-letter code: Ribosomal RNA large subunit methyltransferase H (159 aa).

S-adenosyl-L-methionine is bound by residues L76, G108, and 127-132; that span reads FGRMTY.

Belongs to the RNA methyltransferase RlmH family. In terms of assembly, homodimer.

The protein resides in the cytoplasm. The enzyme catalyses pseudouridine(1915) in 23S rRNA + S-adenosyl-L-methionine = N(3)-methylpseudouridine(1915) in 23S rRNA + S-adenosyl-L-homocysteine + H(+). Specifically methylates the pseudouridine at position 1915 (m3Psi1915) in 23S rRNA. This chain is Ribosomal RNA large subunit methyltransferase H, found in Carboxydothermus hydrogenoformans (strain ATCC BAA-161 / DSM 6008 / Z-2901).